Here is an 81-residue protein sequence, read N- to C-terminus: Putative defensin-like protein 52 (81 aa).

An N-terminal signal peptide occupies residues 1–20 (MTFFLVIILAISSSNYNVLA). 2 cysteine pairs are disulfide-bonded: Cys31/Cys55 and Cys41/Cys64.

The protein belongs to the DEFL family.

The protein resides in the secreted. In Arabidopsis thaliana (Mouse-ear cress), this protein is Putative defensin-like protein 52.